Reading from the N-terminus, the 838-residue chain is Protein translocase subunit SecA (838 aa).

ATP contacts are provided by residues Gln-86, 104-108 (GEGKT), and Asp-493. The interval 793–838 (NTQAVSGGEDSGKKKTKKPVVKSNTVKRNDPCPCGSGKKYKNCHGQ) is disordered. Cys-824, Cys-826, Cys-835, and His-836 together coordinate Zn(2+).

It belongs to the SecA family. Monomer and homodimer. Part of the essential Sec protein translocation apparatus which comprises SecA, SecYEG and auxiliary proteins SecDF. Other proteins may also be involved. Zn(2+) is required as a cofactor.

The protein localises to the cell membrane. Its subcellular location is the cytoplasm. It catalyses the reaction ATP + H2O + cellular proteinSide 1 = ADP + phosphate + cellular proteinSide 2.. In terms of biological role, part of the Sec protein translocase complex. Interacts with the SecYEG preprotein conducting channel. Has a central role in coupling the hydrolysis of ATP to the transfer of proteins into and across the cell membrane, serving as an ATP-driven molecular motor driving the stepwise translocation of polypeptide chains across the membrane. This chain is Protein translocase subunit SecA, found in Oceanobacillus iheyensis (strain DSM 14371 / CIP 107618 / JCM 11309 / KCTC 3954 / HTE831).